The following is a 152-amino-acid chain: Xanthine-guanine phosphoribosyltransferase (152 aa).

Residues Arg-37 to Gly-38, Arg-69, and Asp-88 to Thr-96 contribute to the 5-phospho-alpha-D-ribose 1-diphosphate site. Residue Arg-69 participates in GMP binding. Asp-89 is a binding site for Mg(2+). The guanine site is built by Asp-92 and Ile-135. The xanthine site is built by Asp-92 and Ile-135. GMP contacts are provided by residues Asp-92–Thr-96 and Trp-134–Ile-135.

The protein belongs to the purine/pyrimidine phosphoribosyltransferase family. XGPT subfamily. Homotetramer. It depends on Mg(2+) as a cofactor.

It is found in the cell inner membrane. The catalysed reaction is GMP + diphosphate = guanine + 5-phospho-alpha-D-ribose 1-diphosphate. The enzyme catalyses XMP + diphosphate = xanthine + 5-phospho-alpha-D-ribose 1-diphosphate. It carries out the reaction IMP + diphosphate = hypoxanthine + 5-phospho-alpha-D-ribose 1-diphosphate. It participates in purine metabolism; GMP biosynthesis via salvage pathway; GMP from guanine: step 1/1. It functions in the pathway purine metabolism; XMP biosynthesis via salvage pathway; XMP from xanthine: step 1/1. Purine salvage pathway enzyme that catalyzes the transfer of the ribosyl-5-phosphate group from 5-phospho-alpha-D-ribose 1-diphosphate (PRPP) to the N9 position of the 6-oxopurines guanine and xanthine to form the corresponding ribonucleotides GMP (guanosine 5'-monophosphate) and XMP (xanthosine 5'-monophosphate), with the release of PPi. To a lesser extent, also acts on hypoxanthine. In Pectobacterium atrosepticum (strain SCRI 1043 / ATCC BAA-672) (Erwinia carotovora subsp. atroseptica), this protein is Xanthine-guanine phosphoribosyltransferase.